Consider the following 110-residue polypeptide: UPF0122 protein LMOf2365_1829 (110 aa).

Belongs to the UPF0122 family.

Its function is as follows. Might take part in the signal recognition particle (SRP) pathway. This is inferred from the conservation of its genetic proximity to ftsY/ffh. May be a regulatory protein. This Listeria monocytogenes serotype 4b (strain F2365) protein is UPF0122 protein LMOf2365_1829.